Here is a 129-residue protein sequence, read N- to C-terminus: Arsenate-mycothiol transferase ArsC2 (129 aa).

Belongs to the low molecular weight phosphotyrosine protein phosphatase family.

It localises to the cytoplasm. The enzyme catalyses mycothiol + arsenate = arseno-mycothiol + H2O. Involved in defense against toxic arsenate. Involved in the mycothiol/myoredoxin redox pathway which uses a mycothioltransferase mechanism; facilitates adduct formation between arsenate and mycothiol. In Corynebacterium glutamicum (strain ATCC 13032 / K051), this protein is Arsenate-mycothiol transferase ArsC2 (arsC2).